The primary structure comprises 61 residues: Small ribosomal subunit protein uS14 (61 aa).

Positions 24, 27, 40, and 43 each coordinate Zn(2+).

The protein belongs to the universal ribosomal protein uS14 family. Zinc-binding uS14 subfamily. As to quaternary structure, part of the 30S ribosomal subunit. Contacts proteins S3 and S10. Requires Zn(2+) as cofactor.

Functionally, binds 16S rRNA, required for the assembly of 30S particles and may also be responsible for determining the conformation of the 16S rRNA at the A site. The chain is Small ribosomal subunit protein uS14 from Moorella thermoacetica (strain ATCC 39073 / JCM 9320).